We begin with the raw amino-acid sequence, 964 residues long: Phosphoenolpyruvate carboxylase (964 aa).

Ser-11 bears the Phosphoserine mark. Active-site residues include His-172 and Lys-600.

It belongs to the PEPCase type 1 family. In terms of assembly, homotetramer. It depends on Mg(2+) as a cofactor.

Its subcellular location is the cytoplasm. It carries out the reaction oxaloacetate + phosphate = phosphoenolpyruvate + hydrogencarbonate. It functions in the pathway photosynthesis; C4 acid pathway. By light-reversible phosphorylation. In terms of biological role, through the carboxylation of phosphoenolpyruvate (PEP) it forms oxaloacetate, a four-carbon dicarboxylic acid source for the tricarboxylic acid cycle. This Nicotiana tabacum (Common tobacco) protein is Phosphoenolpyruvate carboxylase (PPC).